The sequence spans 920 residues: Protein FAN (920 aa).

The region spanning 176 to 247 (RLARTSFDKN…QDVRRIYKRR (72 aa)) is the GRAM domain. Residues 189-286 (SVSEKLHMEC…DRDDLYFYIA (98 aa)) form the BEACH-type PH domain. Residues 290–575 (EHHAAEHTAE…QLFVTPHPRR (286 aa)) form the BEACH domain. WD repeat units follow at residues 631 to 661 (IHKE…KMFS), 673 to 703 (FSNM…YFYS), 715 to 743 (GHDD…KVWS), 764 to 794 (EHDV…NIWD), 806 to 836 (CHSG…NVID), and 887 to 917 (GHTG…MFWK).

Couples the p55 TNF-receptor (TNF-R55 / TNFR1) to neutral sphingomyelinase (N-SMASE). Specifically binds to the N-smase activation domain of TNF-R55. May regulate ceramide production by N-SMASE. This is Protein FAN (Nsmaf) from Mus musculus (Mouse).